A 273-amino-acid polypeptide reads, in one-letter code: DNA repair protein RecO (273 aa).

Positions 250–273 (NVGQNPSGKDDLNERRDVDGTGES) are disordered. Residues 257 to 273 (GKDDLNERRDVDGTGES) show a composition bias toward basic and acidic residues.

The protein belongs to the RecO family.

Its function is as follows. Involved in DNA repair and RecF pathway recombination. In Desulfitobacterium hafniense (strain Y51), this protein is DNA repair protein RecO.